A 141-amino-acid chain; its full sequence is Nucleoside diphosphate kinase (141 aa).

ATP-binding residues include Lys-11, Phe-59, Arg-87, Thr-93, Arg-104, and Asn-114. His-117 serves as the catalytic Pros-phosphohistidine intermediate.

This sequence belongs to the NDK family. Homotetramer. Mg(2+) serves as cofactor.

It localises to the cytoplasm. The catalysed reaction is a 2'-deoxyribonucleoside 5'-diphosphate + ATP = a 2'-deoxyribonucleoside 5'-triphosphate + ADP. The enzyme catalyses a ribonucleoside 5'-diphosphate + ATP = a ribonucleoside 5'-triphosphate + ADP. Major role in the synthesis of nucleoside triphosphates other than ATP. The ATP gamma phosphate is transferred to the NDP beta phosphate via a ping-pong mechanism, using a phosphorylated active-site intermediate. The protein is Nucleoside diphosphate kinase of Pseudomonas fluorescens (strain Pf0-1).